The sequence spans 236 residues: Small ribosomal subunit protein uS5 (236 aa).

Positions 1–10 (MTENNEKDIQ) are enriched in basic and acidic residues. Positions 1-64 (MTENNEKDIQ…GRDGGREAEK (64 aa)) are disordered. Low complexity predominate over residues 11–27 (VTEAVAAPATETAAPAT). The segment covering 28 to 64 (TDDRRGGARRGERGDRGQGRGDRGGRGGRDGGREAEK) has biased composition (basic and acidic residues). An S5 DRBM domain is found at 67 to 130 (FVERVVTINR…EEAKKSFFRV (64 aa)).

This sequence belongs to the universal ribosomal protein uS5 family. In terms of assembly, part of the 30S ribosomal subunit. Contacts proteins S4 and S8.

Its function is as follows. With S4 and S12 plays an important role in translational accuracy. Located at the back of the 30S subunit body where it stabilizes the conformation of the head with respect to the body. The polypeptide is Small ribosomal subunit protein uS5 (Arthrobacter sp. (strain FB24)).